The following is a 375-amino-acid chain: MPLNSLGFAKPPSETRVVVAMSGGVDSSVVAAYLADQGYDVVGVTLQLYDHGAALAKKGACCAGIDIHDARRVAEERGFPHYVLDYENIFKDAVIDEFADSYLAGATPVPCIRCNERVKFKDLLETARDLEADCMATGHYIQRKMGPNGPELHCAEDANRDQSYFLFSTTPEQLDYLRFPLGHLPSKDATREMAAQYGLAVADKPDSQDICFVPNGNYASVIEKLRPGAAEPGEIVHADGRVLGSHEGVIHYTIGQRRGLGIGGLSEPLYVVRLDVDRKQVVVGPKELLATRTIPVREINWLGDAPFTSRPEWHLSVKVRSTRPPREAIVRPISETEAEVELLTPEEGVSPGQACVFYESDGSRIFGGGWIWRGY.

ATP contacts are provided by residues 20–27 and L46; that span reads AMSGGVDS. Residue C114 is the Nucleophile of the active site. C114 and C211 form a disulfide bridge. G138 contacts ATP. Positions 160–162 are interaction with tRNA; it reads RDQ. C211 acts as the Cysteine persulfide intermediate in catalysis.

Belongs to the MnmA/TRMU family.

The protein localises to the cytoplasm. It carries out the reaction S-sulfanyl-L-cysteinyl-[protein] + uridine(34) in tRNA + AH2 + ATP = 2-thiouridine(34) in tRNA + L-cysteinyl-[protein] + A + AMP + diphosphate + H(+). In terms of biological role, catalyzes the 2-thiolation of uridine at the wobble position (U34) of tRNA, leading to the formation of s(2)U34. The chain is tRNA-specific 2-thiouridylase MnmA from Ruegeria pomeroyi (strain ATCC 700808 / DSM 15171 / DSS-3) (Silicibacter pomeroyi).